The chain runs to 210 residues: MTGLFVTLEGPEGAGKSTNRDYLAERLRERGVEVQLTREPGGTPLAERIRELLLAPSDEPMAADTELLLMFAARAQHIAGVIRPALARGAVVLCDRFTDATYAYQGGGRGLPEARIAALESFVQGDLRPDLTLVFDLPVEIGLARAAARGRLDRFEQEDRRFFEAVRQTYLQRAAQAPQRYQVLDAGLPLAEVQAGLDRLLPNLLERLHG.

10–17 (GPEGAGKS) provides a ligand contact to ATP.

The protein belongs to the thymidylate kinase family.

It carries out the reaction dTMP + ATP = dTDP + ADP. In terms of biological role, phosphorylation of dTMP to form dTDP in both de novo and salvage pathways of dTTP synthesis. The polypeptide is Thymidylate kinase (Pseudomonas paraeruginosa (strain DSM 24068 / PA7) (Pseudomonas aeruginosa (strain PA7))).